The following is a 78-amino-acid chain: Large ribosomal subunit protein bL28 (78 aa).

The tract at residues 1–31 (MAAHCQVTGAEPGFGHSISHSHRRNKRRFDP) is disordered.

It belongs to the bacterial ribosomal protein bL28 family.

This Pseudarthrobacter chlorophenolicus (strain ATCC 700700 / DSM 12829 / CIP 107037 / JCM 12360 / KCTC 9906 / NCIMB 13794 / A6) (Arthrobacter chlorophenolicus) protein is Large ribosomal subunit protein bL28.